A 396-amino-acid chain; its full sequence is Ribosomal RNA small subunit methyltransferase H (396 aa).

S-adenosyl-L-methionine contacts are provided by residues 101-103 (GGH), Asp-120, Tyr-147, Asp-171, and Gln-178.

This sequence belongs to the methyltransferase superfamily. RsmH family.

It localises to the cytoplasm. It carries out the reaction cytidine(1402) in 16S rRNA + S-adenosyl-L-methionine = N(4)-methylcytidine(1402) in 16S rRNA + S-adenosyl-L-homocysteine + H(+). Its function is as follows. Specifically methylates the N4 position of cytidine in position 1402 (C1402) of 16S rRNA. The sequence is that of Ribosomal RNA small subunit methyltransferase H from Mycobacterium bovis (strain ATCC BAA-935 / AF2122/97).